We begin with the raw amino-acid sequence, 214 residues long: Heat shock protein 26 (214 aa).

N-acetylserine is present on serine 2. A Phosphothreonine modification is found at threonine 42. The sHSP domain maps to 86–207; it reads GFPRSVAVPV…KNHVKKIEVS (122 aa). Serine 90 carries the post-translational modification Phosphoserine. At threonine 163 the chain carries Phosphothreonine. The disordered stretch occupies residues 192-214; it reads KPQKDGKNHVKKIEVSSQESWGN. Basic and acidic residues predominate over residues 193-205; it reads PQKDGKNHVKKIE. Serine 208 and serine 211 each carry phosphoserine.

Belongs to the small heat shock protein (HSP20) family. In terms of assembly, present in large complexes.

Functionally, not known. One of the major polypeptides produced on heat shock. The polypeptide is Heat shock protein 26 (HSP26) (Saccharomyces cerevisiae (strain ATCC 204508 / S288c) (Baker's yeast)).